A 95-amino-acid chain; its full sequence is MLHTLHRSPWLADFAALLRLLSEGDELLLLQDGVTAAVDGNRYLESLRNAPIKVYALNEDLIARGLTGQISNDIIPIDYTDFVRLTVKHSSQMAW.

The protein belongs to the DsrH/TusB family. In terms of assembly, heterohexamer, formed by a dimer of trimers. The hexameric TusBCD complex contains 2 copies each of TusB, TusC and TusD. The TusBCD complex interacts with TusE.

It localises to the cytoplasm. Part of a sulfur-relay system required for 2-thiolation of 5-methylaminomethyl-2-thiouridine (mnm(5)s(2)U) at tRNA wobble positions. The chain is Protein TusB from Shigella sonnei (strain Ss046).